Here is a 343-residue protein sequence, read N- to C-terminus: Cytoplasmic tRNA 2-thiolation protein 1 (343 aa).

The protein belongs to the TtcA family. CTU1/NCS6/ATPBD3 subfamily.

The protein resides in the cytoplasm. It functions in the pathway tRNA modification; 5-methoxycarbonylmethyl-2-thiouridine-tRNA biosynthesis. In terms of biological role, plays a central role in 2-thiolation of mcm(5)S(2)U at tRNA wobble positions of tRNA(Lys), tRNA(Glu) and tRNA(Gln). Directly binds tRNAs and probably acts by catalyzing adenylation of tRNAs, an intermediate required for 2-thiolation. It is unclear whether it acts as a sulfurtransferase that transfers sulfur from thiocarboxylated URM1 onto the uridine of tRNAs at wobble position. In Drosophila mojavensis (Fruit fly), this protein is Cytoplasmic tRNA 2-thiolation protein 1.